A 67-amino-acid chain; its full sequence is DNA-directed RNA polymerase subunit omega (67 aa).

This sequence belongs to the RNA polymerase subunit omega family. As to quaternary structure, the RNAP catalytic core consists of 2 alpha, 1 beta, 1 beta' and 1 omega subunit. When a sigma factor is associated with the core the holoenzyme is formed, which can initiate transcription.

The enzyme catalyses RNA(n) + a ribonucleoside 5'-triphosphate = RNA(n+1) + diphosphate. In terms of biological role, promotes RNA polymerase assembly. Latches the N- and C-terminal regions of the beta' subunit thereby facilitating its interaction with the beta and alpha subunits. This is DNA-directed RNA polymerase subunit omega from Methylibium petroleiphilum (strain ATCC BAA-1232 / LMG 22953 / PM1).